A 317-amino-acid chain; its full sequence is N(5)-(carboxyethyl)ornithine synthase (317 aa).

Pyruvate is bound by residues R15, K71, and H92. 172-177 is a binding site for NADP(+); the sequence is GSGNVS.

The protein belongs to the AlaDH/PNT family. CEOS subfamily. As to quaternary structure, homotetramer.

The catalysed reaction is N(5)-[1(S)-1-carboxyethyl]-L-ornithine + NADP(+) + H2O = L-ornithine + pyruvate + NADPH + H(+). Catalyzes the NADPH-dependent reductive condensation between pyruvic acid and the side chain amino group of L-ornithine to form N(5)-(L-1-carboxyethyl)-L-ornithine. To a lesser extent, can also use L-lysine as substrate (yielding N(6)-(L-1-carboxyethyl)-L-lysine), and the D-isomers of the 2 basic amino acids. Can use alpha-keto acids other than pyruvate, e.g. glyoxylate. The protein is N(5)-(carboxyethyl)ornithine synthase (ceo) of Clostridium botulinum (strain Hall / ATCC 3502 / NCTC 13319 / Type A).